The primary structure comprises 122 residues: Large ribosomal subunit protein uL14 (122 aa).

The protein belongs to the universal ribosomal protein uL14 family. As to quaternary structure, part of the 50S ribosomal subunit. Forms a cluster with proteins L3 and L19. In the 70S ribosome, L14 and L19 interact and together make contacts with the 16S rRNA in bridges B5 and B8.

In terms of biological role, binds to 23S rRNA. Forms part of two intersubunit bridges in the 70S ribosome. In Sorangium cellulosum (strain So ce56) (Polyangium cellulosum (strain So ce56)), this protein is Large ribosomal subunit protein uL14.